The chain runs to 392 residues: 8-amino-7-oxononanoate synthase (392 aa).

A substrate-binding site is contributed by arginine 19. 106–107 (GY) serves as a coordination point for pyridoxal 5'-phosphate. Histidine 131 contacts substrate. Positions 176, 204, and 233 each coordinate pyridoxal 5'-phosphate. Residue lysine 236 is modified to N6-(pyridoxal phosphate)lysine. Threonine 350 provides a ligand contact to substrate.

Belongs to the class-II pyridoxal-phosphate-dependent aminotransferase family. BioF subfamily. As to quaternary structure, homodimer. Pyridoxal 5'-phosphate serves as cofactor.

The enzyme catalyses 6-carboxyhexanoyl-[ACP] + L-alanine + H(+) = (8S)-8-amino-7-oxononanoate + holo-[ACP] + CO2. It functions in the pathway cofactor biosynthesis; biotin biosynthesis. Catalyzes the decarboxylative condensation of pimeloyl-[acyl-carrier protein] and L-alanine to produce 8-amino-7-oxononanoate (AON), [acyl-carrier protein], and carbon dioxide. This Pseudomonas fluorescens (strain ATCC BAA-477 / NRRL B-23932 / Pf-5) protein is 8-amino-7-oxononanoate synthase.